A 342-amino-acid polypeptide reads, in one-letter code: tRNA-specific 2-thiouridylase MnmA (342 aa).

Residues 6–13 and L32 each bind ATP; that span reads LLSGGVDS. The active-site Nucleophile is the C92. C92 and C191 are oxidised to a cystine. Residue G116 participates in ATP binding. The tract at residues 138–140 is interaction with tRNA; that stretch reads KDQ. C191 functions as the Cysteine persulfide intermediate in the catalytic mechanism. An interaction with tRNA region spans residues 293 to 294; sequence RY.

The protein belongs to the MnmA/TRMU family.

The protein localises to the cytoplasm. It carries out the reaction S-sulfanyl-L-cysteinyl-[protein] + uridine(34) in tRNA + AH2 + ATP = 2-thiouridine(34) in tRNA + L-cysteinyl-[protein] + A + AMP + diphosphate + H(+). Functionally, catalyzes the 2-thiolation of uridine at the wobble position (U34) of tRNA, leading to the formation of s(2)U34. This chain is tRNA-specific 2-thiouridylase MnmA, found in Helicobacter pylori (strain G27).